The primary structure comprises 235 residues: ATP synthase subunit a (235 aa).

Helical transmembrane passes span 17-37, 76-96, 113-133, 179-201, and 211-230; these read TTNI…LYGM, SFFA…GLIF, PVVT…AGVA, LLMS…PGLF, and VFIG…VYIS.

It belongs to the ATPase A chain family. F-type ATPases have 2 components, CF(1) - the catalytic core - and CF(0) - the membrane proton channel. CF(1) has five subunits: alpha(3), beta(3), gamma(1), delta(1), epsilon(1). CF(0) has three main subunits: a(1), b(2) and c(9-12). The alpha and beta chains form an alternating ring which encloses part of the gamma chain. CF(1) is attached to CF(0) by a central stalk formed by the gamma and epsilon chains, while a peripheral stalk is formed by the delta and b chains.

It localises to the cell membrane. Key component of the proton channel; it plays a direct role in the translocation of protons across the membrane. The chain is ATP synthase subunit a from Limosilactobacillus reuteri subsp. reuteri (strain JCM 1112) (Lactobacillus reuteri).